A 418-amino-acid chain; its full sequence is UPF0261 protein BMEII0128 (418 aa).

Belongs to the UPF0261 family.

The chain is UPF0261 protein BMEII0128 from Brucella melitensis biotype 1 (strain ATCC 23456 / CCUG 17765 / NCTC 10094 / 16M).